Consider the following 573-residue polypeptide: Glutamate--tRNA ligase (573 aa).

The 'HIGH' region signature appears at 107 to 117 (PNPDGAFHLGN).

It belongs to the class-I aminoacyl-tRNA synthetase family. Glutamate--tRNA ligase type 2 subfamily.

Its subcellular location is the cytoplasm. It catalyses the reaction tRNA(Glu) + L-glutamate + ATP = L-glutamyl-tRNA(Glu) + AMP + diphosphate. In terms of biological role, catalyzes the attachment of glutamate to tRNA(Glu) in a two-step reaction: glutamate is first activated by ATP to form Glu-AMP and then transferred to the acceptor end of tRNA(Glu). In Thermococcus kodakarensis (strain ATCC BAA-918 / JCM 12380 / KOD1) (Pyrococcus kodakaraensis (strain KOD1)), this protein is Glutamate--tRNA ligase.